The chain runs to 177 residues: Prorelaxin (177 aa).

The signal sequence occupies residues 1-22 (MSCKFVLQLLGFWLLLSQPCRA). 3 disulfides stabilise this stretch: cysteine 36–cysteine 164, cysteine 48–cysteine 177, and cysteine 163–cysteine 168. The propeptide at 64–149 (MTEEAVSSFI…LKSLYLDTLS (86 aa)) is connecting peptide. The interval 80 to 114 (FDTMPNLSEKPKTALPEGHPSLPEQQQYVPVSSDS) is disordered. The segment covering 102-114 (PEQQQYVPVSSDS) has biased composition (polar residues).

The protein belongs to the insulin family. As to quaternary structure, heterodimer of a B chain and an A chain linked by two disulfide bonds.

Its subcellular location is the secreted. In terms of biological role, relaxin is an ovarian hormone that acts with estrogen to produce dilatation of the birth canal in many mammals. It bears mature young, and allows separation of the pelvic bones. The sequence is that of Prorelaxin (RLN) from Mesocricetus auratus (Golden hamster).